We begin with the raw amino-acid sequence, 117 residues long: Large ribosomal subunit protein uL18 (117 aa).

It belongs to the universal ribosomal protein uL18 family. Part of the 50S ribosomal subunit; part of the 5S rRNA/L5/L18/L25 subcomplex. Contacts the 5S and 23S rRNAs.

In terms of biological role, this is one of the proteins that bind and probably mediate the attachment of the 5S RNA into the large ribosomal subunit, where it forms part of the central protuberance. In Methylobacillus flagellatus (strain ATCC 51484 / DSM 6875 / VKM B-1610 / KT), this protein is Large ribosomal subunit protein uL18.